Reading from the N-terminus, the 203-residue chain is Endo-type membrane-bound lytic murein transglycosylase A (203 aa).

Residues M1 to G15 form the signal peptide. C16 is lipidated: N-palmitoyl cysteine. C16 carries S-diacylglycerol cysteine lipidation.

The protein belongs to the transglycosylase Slt family.

The protein localises to the cell outer membrane. The enzyme catalyses Endolytic cleavage of the (1-&gt;4)-beta-glycosidic linkage between N-acetylmuramic acid (MurNAc) and N-acetylglucosamine (GlcNAc) residues in peptidoglycan with concomitant formation of a 1,6-anhydrobond in the MurNAc residue.. Functionally, murein-degrading enzyme. May play a role in recycling of muropeptides during cell elongation and/or cell division. Preferentially cleaves at a distance of more than two disaccharide units from the ends of the glycan chain. This is Endo-type membrane-bound lytic murein transglycosylase A from Klebsiella pneumoniae (strain 342).